A 165-amino-acid chain; its full sequence is uncharacterized protein (165 aa).

The disordered stretch occupies residues 1–36 (MTRLCLPRPEAREDPIPVPPRGLGAGEGSGSPVRPP). The chain crosses the membrane as a helical span at residues 135 to 155 (LLLLMGLGPLLRACGMPLTLL).

It localises to the membrane. This is an uncharacterized protein from Homo sapiens (Human).